A 166-amino-acid chain; its full sequence is MKYTSYFLALLLCVLLGFSGSYGQGQFFREIENLKEYFNASSPDVAKGGPLFSEILKNWKDESDKKIIQSQIVSFYFKLFENLKDNQVIQRSMDIIKQDMFQKFLNGSSEKPEDFKKLIQIPVDDLQIQRKAINELIKVMNDLSPKSNLRKRKRSQNLFRGRRASM.

A signal peptide spans methionine 1 to glycine 23. Residue glutamine 24 is modified to Pyrrolidone carboxylic acid. N-linked (GlcNAc...) asparagine glycosylation is found at asparagine 39 and asparagine 106.

Belongs to the type II (or gamma) interferon family. As to quaternary structure, homodimer. Interacts with IFNGR1 (via extracellular domain); this interaction promotes IFNGR1 dimerization. Released primarily from activated T lymphocytes.

Its subcellular location is the secreted. Type II interferon produced by immune cells such as T-cells and NK cells that plays crucial roles in antimicrobial, antiviral, and antitumor responses by activating effector immune cells and enhancing antigen presentation. Primarily signals through the JAK-STAT pathway after interaction with its receptor IFNGR1 to affect gene regulation. Upon IFNG binding, IFNGR1 intracellular domain opens out to allow association of downstream signaling components JAK2, JAK1 and STAT1, leading to STAT1 activation, nuclear translocation and transcription of IFNG-regulated genes. Many of the induced genes are transcription factors such as IRF1 that are able to further drive regulation of a next wave of transcription. Plays a role in class I antigen presentation pathway by inducing a replacement of catalytic proteasome subunits with immunoproteasome subunits. In turn, increases the quantity, quality, and repertoire of peptides for class I MHC loading. Increases the efficiency of peptide generation also by inducing the expression of activator PA28 that associates with the proteasome and alters its proteolytic cleavage preference. Up-regulates as well MHC II complexes on the cell surface by promoting expression of several key molecules such as cathepsins B/CTSB, H/CTSH, and L/CTSL. Participates in the regulation of hematopoietic stem cells during development and under homeostatic conditions by affecting their development, quiescence, and differentiation. The chain is Interferon gamma (IFNG) from Bos indicus (Zebu).